A 332-amino-acid polypeptide reads, in one-letter code: Flotillin-like protein FloA (332 aa).

2 helical membrane passes run 6–26 (LGYL…FSFV) and 28–48 (VGLW…YMIG).

This sequence belongs to the flotillin-like FloA family. In terms of assembly, homooligomerizes.

Its subcellular location is the cell membrane. The protein resides in the membrane raft. Functionally, found in functional membrane microdomains (FMM) that may be equivalent to eukaryotic membrane rafts. FMMs are highly dynamic and increase in number as cells age. Flotillins are thought to be important factors in membrane fluidity. In Symbiobacterium thermophilum (strain DSM 24528 / JCM 14929 / IAM 14863 / T), this protein is Flotillin-like protein FloA.